The sequence spans 216 residues: Small ribosomal subunit protein uS5 (216 aa).

Residues 1–55 (MDRKLENQKDLLNQDPKVELNSQSVAKNPLNSREVKPIQRRRPLRKNSRDKNSKP) are disordered. Positions 20 to 31 (LNSQSVAKNPLN) are enriched in polar residues. One can recognise an S5 DRBM domain in the interval 57–120 (FEERVIAIHR…KDAQNRLVSV (64 aa)).

The protein belongs to the universal ribosomal protein uS5 family. In terms of assembly, part of the 30S ribosomal subunit. Contacts proteins S4 and S8.

Functionally, with S4 and S12 plays an important role in translational accuracy. Located at the back of the 30S subunit body where it stabilizes the conformation of the head with respect to the body. This Mesomycoplasma hyopneumoniae (strain J / ATCC 25934 / NCTC 10110) (Mycoplasma hyopneumoniae) protein is Small ribosomal subunit protein uS5.